The sequence spans 290 residues: Proteasome subunit beta (290 aa).

Residues 1–58 constitute a propeptide, removed in mature form; by autocatalysis; sequence MTTSGGLTGPGAFGRLPQPFHQPGITSFVEFLALQAPDLLPGRLQMPAGGQPPEVPHG. T59 serves as the catalytic Nucleophile.

The protein belongs to the peptidase T1B family. In terms of assembly, the 20S proteasome core is composed of 14 alpha and 14 beta subunits that assemble into four stacked heptameric rings, resulting in a barrel-shaped structure. The two inner rings, each composed of seven catalytic beta subunits, are sandwiched by two outer rings, each composed of seven alpha subunits. The catalytic chamber with the active sites is on the inside of the barrel. Has a gated structure, the ends of the cylinder being occluded by the N-termini of the alpha-subunits. Is capped by the proteasome-associated ATPase, ARC.

It is found in the cytoplasm. The catalysed reaction is Cleavage of peptide bonds with very broad specificity.. It functions in the pathway protein degradation; proteasomal Pup-dependent pathway. The formation of the proteasomal ATPase ARC-20S proteasome complex, likely via the docking of the C-termini of ARC into the intersubunit pockets in the alpha-rings, may trigger opening of the gate for substrate entry. Interconversion between the open-gate and close-gate conformations leads to a dynamic regulation of the 20S proteasome proteolysis activity. Its function is as follows. Component of the proteasome core, a large protease complex with broad specificity involved in protein degradation. This Acidothermus cellulolyticus (strain ATCC 43068 / DSM 8971 / 11B) protein is Proteasome subunit beta.